The sequence spans 360 residues: Endolytic murein transglycosylase (360 aa).

A helical membrane pass occupies residues 16 to 36 (IILSSIVVLFLIIGGAFLYGK).

The protein belongs to the transglycosylase MltG family.

It localises to the cell membrane. The catalysed reaction is a peptidoglycan chain = a peptidoglycan chain with N-acetyl-1,6-anhydromuramyl-[peptide] at the reducing end + a peptidoglycan chain with N-acetylglucosamine at the non-reducing end.. Functions as a peptidoglycan terminase that cleaves nascent peptidoglycan strands endolytically to terminate their elongation. The polypeptide is Endolytic murein transglycosylase (Bacillus subtilis (strain 168)).